Here is a 115-residue protein sequence, read N- to C-terminus: MISKPDKNKLRQKRHTRVRGKISGTSETPRLNVFRSNTNIYAQVIDDVTGTTLASASSLKLTGTKTEQAAEVGKLVAEAAKAKGVEEVVFDRGGYLYHGRVAALATAAREAGLKF.

Positions 1 to 29 (MISKPDKNKLRQKRHTRVRGKISGTSETP) are disordered. Over residues 10 to 20 (LRQKRHTRVRG) the composition is skewed to basic residues.

This sequence belongs to the universal ribosomal protein uL18 family. As to quaternary structure, part of the 50S ribosomal subunit; part of the 5S rRNA/L5/L18/L25 subcomplex. Contacts the 5S and 23S rRNAs.

In terms of biological role, this is one of the proteins that bind and probably mediate the attachment of the 5S RNA into the large ribosomal subunit, where it forms part of the central protuberance. The polypeptide is Large ribosomal subunit protein uL18 (Lactococcus lactis subsp. lactis (strain IL1403) (Streptococcus lactis)).